A 339-amino-acid chain; its full sequence is Uroporphyrinogen decarboxylase (339 aa).

Residues 21 to 25 (RQAGR), Asp71, Tyr147, Ser202, and His315 contribute to the substrate site.

The protein belongs to the uroporphyrinogen decarboxylase family. In terms of assembly, homodimer.

It is found in the cytoplasm. It catalyses the reaction uroporphyrinogen III + 4 H(+) = coproporphyrinogen III + 4 CO2. Its pathway is porphyrin-containing compound metabolism; protoporphyrin-IX biosynthesis; coproporphyrinogen-III from 5-aminolevulinate: step 4/4. Its function is as follows. Catalyzes the decarboxylation of four acetate groups of uroporphyrinogen-III to yield coproporphyrinogen-III. The sequence is that of Uroporphyrinogen decarboxylase from Helicobacter pylori (strain Shi470).